Here is a 79-residue protein sequence, read N- to C-terminus: Short neurotoxin 3 (79 aa).

Residues 1–21 form the signal peptide; the sequence is MKTLLLTLVMVTIMCLDLGYT. 4 disulfides stabilise this stretch: C24–C41, C34–C59, C63–C71, and C72–C77.

The protein belongs to the three-finger toxin family. Short-chain subfamily. Type III alpha-neurotoxin sub-subfamily. As to expression, expressed by the venom gland.

Its subcellular location is the secreted. In terms of biological role, binds with high affinity to muscle nicotinic acetylcholine receptor (nAChR) and hinders acetylcholine binding to the receptor, thereby impairing neuromuscular transmission. Competes with the binding of alpha-bungarotoxin on muscle AChR (from Torpedo) with an IC(50) of 0.30 uM. Causes muscle paralysis, spasms and increased respiration. The polypeptide is Short neurotoxin 3 (Pseudonaja textilis (Eastern brown snake)).